A 119-amino-acid polypeptide reads, in one-letter code: Flagellar transcriptional regulator FlhD (119 aa).

Belongs to the FlhD family. In terms of assembly, homodimer; disulfide-linked. Forms a heterohexamer composed of two FlhC and four FlhD subunits. Each FlhC binds a FlhD dimer, forming a heterotrimer, and a hexamer assembles by dimerization of two heterotrimers.

Its subcellular location is the cytoplasm. Functionally, functions in complex with FlhC as a master transcriptional regulator that regulates transcription of several flagellar and non-flagellar operons by binding to their promoter region. Activates expression of class 2 flagellar genes, including fliA, which is a flagellum-specific sigma factor that turns on the class 3 genes. Also regulates genes whose products function in a variety of physiological pathways. The chain is Flagellar transcriptional regulator FlhD from Shigella boydii serotype 4 (strain Sb227).